The following is a 565-amino-acid chain: DNA mismatch repair protein MutL (565 aa).

Belongs to the DNA mismatch repair MutL/HexB family.

This protein is involved in the repair of mismatches in DNA. It is required for dam-dependent methyl-directed DNA mismatch repair. May act as a 'molecular matchmaker', a protein that promotes the formation of a stable complex between two or more DNA-binding proteins in an ATP-dependent manner without itself being part of a final effector complex. This is DNA mismatch repair protein MutL from Desulforudis audaxviator (strain MP104C).